A 253-amino-acid chain; its full sequence is DNA repair protein RecO (253 aa).

Belongs to the RecO family.

Involved in DNA repair and RecF pathway recombination. The sequence is that of DNA repair protein RecO from Streptococcus agalactiae serotype Ia (strain ATCC 27591 / A909 / CDC SS700).